The sequence spans 916 residues: MGKAAAPSRGGGCGGRSRGLSSLFTVVPCLSCHTAAPGMSASTSGSGPEPKPQPQPVPEPERGPLSEQVSEAVSEAVPRSEPVSETTSEPEPGAGQPSELLQGSRPGSESSSGVGAGPFTKAASEPLSRAVGSATFLRPESGSLPALKPLPLLRPGQAKTPLGVPMSGTGTTSSAPLALLPLDSFEGWLLKWTNYLKGYQRRWFVLGNGLLSYYRNQGEMAHTCRGTINLSTAHIDTEDSCGILLTSGARSYHLKASSEVDRQQWITALELAKAKAVRVMNTHSDDSGDDDEATTPADKSELHHTLKNLSLKLDDLSTCNDLIAKHGAALQRSLTELDGLKIPSESGEKLKVVNERATLFRITSNAMINACRDFLELAEIHSRKWQRALQYEQEQRVHLEETIEQLAKQHNSLERAFHSAPGRPANPSKSFIEGSLLTPKGEDSEEDEDTEYFDAMEDSTSFITVITEAKEDSRKAEGSTGTSSVDWSSADNVLDGASLVPKGSSKVKRRVRIPNKPNYSLNLWSIMKNCIGRELSRIPMPVNFNEPLSMLQRLTEDLEYHHLLDKAVHCTSSVEQMCLVAAFSVSSYSTTVHRIAKPFNPMLGETFELDRLDDMGLRSLCEQVSHHPPSAAHYVFSKHGWSLWQEITISSKFRGKYISIMPLGAIHLEFQASGNHYVWRKSTSTVHNIIVGKLWIDQSGDIEIVNHKTNDRCQLKFLPYSYFSKEAARKVTGVVSDSQGKAHYVLSGSWDEQMECSKVMHSSPSSPSSDGKQKTVYQTLSAKLLWKKYPLPENAENMYYFSELALTLNEHEEGVAPTDSRLRPDQRLMEKGRWDEANTEKQRLEEKQRLSRRRRLEACGPGSSCSSEEEKEADAYTPLWFEKRLDPLTGEMACVYKGGYWEAKEKQDWHMCPNIF.

Disordered stretches follow at residues 1 to 20 (MGKA…SRGL), 34 to 121 (TAAP…PFTK), and 139 to 163 (PESG…TPLG). A compositionally biased stretch (pro residues) spans 49 to 58 (EPKPQPQPVP). Low complexity predominate over residues 79–92 (RSEPVSETTSEPEP). Positions 99–113 (ELLQGSRPGSESSSG) are enriched in polar residues. Residues 144 to 155 (LPALKPLPLLRP) show a composition bias toward low complexity. In terms of domain architecture, PH spans 182–274 (LDSFEGWLLK…WITALELAKA (93 aa)). Disordered stretches follow at residues 282-301 (THSD…DKSE) and 417-448 (FHSA…EEDE). Ser287 is subject to Phosphoserine. Residue Ser763 is modified to Phosphoserine. The disordered stretch occupies residues 813–842 (EGVAPTDSRLRPDQRLMEKGRWDEANTEKQ).

Belongs to the OSBP family. Interacts with CCDC159. In terms of tissue distribution, expressed mainly in retina, testis, and fetal liver.

It is found in the membrane. It localises to the cytoplasmic vesicle. The protein localises to the secretory vesicle. Its subcellular location is the acrosome. Functionally, binds 7-ketocholesterol. Acts during spermatid development where its function is required prior to the removal of cytoplasm from the sperm head. The polypeptide is Oxysterol-binding protein 2 (OSBP2) (Homo sapiens (Human)).